The following is a 255-amino-acid chain: Tabinhibitin 2 (255 aa).

An N-terminal signal peptide occupies residues 1–23; it reads MISILVSRFLLAALVLQYATIDA. The short motif at 32–34 is the Cell attachment site element; that stretch reads RGD. One can recognise an SCP domain in the interval 67-211; that stretch reads LSKINDVRDH…KARALLTCNF (145 aa).

Belongs to the CRISP family. In terms of tissue distribution, expressed in salivary glands.

It localises to the secreted. Functionally, inhibits platelet aggregation induced by all agonists tested (ADP, arachidonic acid, the thromboxane A2 analog U46619, thrombin, and snake venom snaclecs (TMVA that activates platelet through GPIB, and stejnulxin that specifically acts through GPVI (GP6))). May act by competing with fibrinogen for binding to glycoprotein IIb/IIIa (ITGA2B/ITGB3). This is Tabinhibitin 2 from Tabanus yao (Horsefly).